The sequence spans 766 residues: Pentatricopeptide repeat-containing protein At3g61520, mitochondrial (766 aa).

The N-terminal 30 residues, M1–V30, are a transit peptide targeting the mitochondrion. 16 PPR repeats span residues T151 to N181, N184 to F218, N221 to P257, N258 to L292, E293 to P327, D328 to K358, D369 to P404, N405 to P439, N440 to G474, N475 to P509, D510 to L544, D545 to P579, D580 to P614, T615 to P650, N651 to P685, and N686 to P720.

The protein belongs to the PPR family. P subfamily.

Its subcellular location is the mitochondrion. The protein is Pentatricopeptide repeat-containing protein At3g61520, mitochondrial of Arabidopsis thaliana (Mouse-ear cress).